The following is a 203-amino-acid chain: LexA repressor (203 aa).

The segment at residues 30 to 50 (VREICQAVSLKSTSTVHGHLK) is a DNA-binding region (H-T-H motif). Residues S127 and K164 each act as for autocatalytic cleavage activity in the active site.

This sequence belongs to the peptidase S24 family. Homodimer.

It carries out the reaction Hydrolysis of Ala-|-Gly bond in repressor LexA.. Its function is as follows. Represses a number of genes involved in the response to DNA damage (SOS response), including recA and lexA. In the presence of single-stranded DNA, RecA interacts with LexA causing an autocatalytic cleavage which disrupts the DNA-binding part of LexA, leading to derepression of the SOS regulon and eventually DNA repair. This Clostridium perfringens (strain 13 / Type A) protein is LexA repressor.